We begin with the raw amino-acid sequence, 307 residues long: Quinolinate synthase (307 aa).

Residues His23 and Ser40 each contribute to the iminosuccinate site. Cys86 contacts [4Fe-4S] cluster. Iminosuccinate contacts are provided by residues 112 to 114 (YVN) and Ser129. A [4Fe-4S] cluster-binding site is contributed by Cys173. Iminosuccinate is bound by residues 199 to 201 (HPE) and Thr216. Cys265 serves as a coordination point for [4Fe-4S] cluster.

Belongs to the quinolinate synthase family. Type 2 subfamily. It depends on [4Fe-4S] cluster as a cofactor.

Its subcellular location is the cytoplasm. It catalyses the reaction iminosuccinate + dihydroxyacetone phosphate = quinolinate + phosphate + 2 H2O + H(+). It functions in the pathway cofactor biosynthesis; NAD(+) biosynthesis; quinolinate from iminoaspartate: step 1/1. Catalyzes the condensation of iminoaspartate with dihydroxyacetone phosphate to form quinolinate. This Methanocaldococcus jannaschii (strain ATCC 43067 / DSM 2661 / JAL-1 / JCM 10045 / NBRC 100440) (Methanococcus jannaschii) protein is Quinolinate synthase.